The sequence spans 208 residues: uncharacterized protein (208 aa).

Positions 124 to 208 (KKTGSSNART…PSFGKYSSLA (85 aa)) are disordered. Over residues 133-170 (TPDEGKKAKNAPEEEKVKTSGSEDAKGEESAVEGKEPE) the composition is skewed to basic and acidic residues.

It is found in the golgi apparatus. This is an uncharacterized protein from Encephalitozoon cuniculi (strain GB-M1) (Microsporidian parasite).